We begin with the raw amino-acid sequence, 389 residues long: Na(+)/H(+) antiporter NhaA (389 aa).

Helical transmembrane passes span 17-37, 59-79, 95-115, 124-144, 154-174, 177-197, 213-233, 261-281, 287-307, 328-348, and 363-383; these read ILLL…LAGL, LLLW…GLEV, SLPT…YLLF, AGWA…MALL, VFLL…IALF, TDLS…LVAL, LVLW…GVII, FLIL…NMSL, PVPV…VMLF, IAPV…IASL, and LGTL…LSKV.

The protein belongs to the NhaA Na(+)/H(+) (TC 2.A.33) antiporter family.

It localises to the cell inner membrane. It carries out the reaction Na(+)(in) + 2 H(+)(out) = Na(+)(out) + 2 H(+)(in). Na(+)/H(+) antiporter that extrudes sodium in exchange for external protons. The protein is Na(+)/H(+) antiporter NhaA of Shewanella sp. (strain MR-7).